Reading from the N-terminus, the 618-residue chain is Methylmalonyl-CoA mutase small subunit (618 aa).

This sequence belongs to the methylmalonyl-CoA mutase family. Heterodimer of an alpha and a beta chain. Adenosylcob(III)alamin is required as a cofactor.

The enzyme catalyses (R)-methylmalonyl-CoA = succinyl-CoA. The protein operates within metabolic intermediate metabolism; propanoyl-CoA degradation; succinyl-CoA from propanoyl-CoA: step 3/3. Its function is as follows. Catalyzes the isomerization of succinyl-CoA to methylmalonyl-CoA during synthesis of propionate from tricarboxylic acid-cycle intermediates. The protein is Methylmalonyl-CoA mutase small subunit (mutA) of Porphyromonas gingivalis (strain ATCC BAA-308 / W83).